The chain runs to 139 residues: MADNQSVLSVSIVTPDGQVYNEQGDLLIVTTKSGQLGIMPNHVPVIASLEVEEARIKRGENEDEIAVNGGFLEFSGNVATIVADSAERQDDIDVNRAENARERAEATIKKAQEAHDADTLARAEVALRRAVNRINVAKH.

This sequence belongs to the ATPase epsilon chain family. F-type ATPases have 2 components, CF(1) - the catalytic core - and CF(0) - the membrane proton channel. CF(1) has five subunits: alpha(3), beta(3), gamma(1), delta(1), epsilon(1). CF(0) has three main subunits: a, b and c.

The protein localises to the cell membrane. Produces ATP from ADP in the presence of a proton gradient across the membrane. In Levilactobacillus brevis (strain ATCC 367 / BCRC 12310 / CIP 105137 / JCM 1170 / LMG 11437 / NCIMB 947 / NCTC 947) (Lactobacillus brevis), this protein is ATP synthase epsilon chain.